The primary structure comprises 231 residues: Large ribosomal subunit protein uL1 (231 aa).

This sequence belongs to the universal ribosomal protein uL1 family. Part of the 50S ribosomal subunit.

In terms of biological role, binds directly to 23S rRNA. The L1 stalk is quite mobile in the ribosome, and is involved in E site tRNA release. Functionally, protein L1 is also a translational repressor protein, it controls the translation of the L11 operon by binding to its mRNA. The sequence is that of Large ribosomal subunit protein uL1 from Buchnera aphidicola subsp. Acyrthosiphon pisum (strain APS) (Acyrthosiphon pisum symbiotic bacterium).